We begin with the raw amino-acid sequence, 722 residues long: Formin-like protein 16 (722 aa).

Disordered regions lie at residues 1–56 (MSPV…PMFD), 564–606 (ATED…PSRP), 635–672 (VGSP…HLSH), and 690–722 (PLLV…LRYQ). A compositionally biased stretch (pro residues) spans 22-55 (PLPPPPPPPMRRSAPSPPPMSGRVPPPPPPPPMF). An FH2 domain is found at 182–571 (FRCPVTKRSS…KAATEDVFGG (390 aa)). 3 stretches are compositionally biased toward pro residues: residues 593-605 (IRPP…PPSR), 638-658 (PSPP…PPPM), and 709-722 (APPP…LRYQ).

This sequence belongs to the formin-like family. Class-II subfamily.

This chain is Formin-like protein 16 (FH16), found in Arabidopsis thaliana (Mouse-ear cress).